Consider the following 118-residue polypeptide: MTDLIPLEQAHCLPRKGSDHKLGEARLTELLPQVPGWELAEAGMALTRTFRFADYYRTLAFVNALAWIAHREDHHPDLGVHYDRVVVRYSTHDVGGLSENDFICAAKTAQLYDQGITA.

Belongs to the pterin-4-alpha-carbinolamine dehydratase family.

The enzyme catalyses (4aS,6R)-4a-hydroxy-L-erythro-5,6,7,8-tetrahydrobiopterin = (6R)-L-erythro-6,7-dihydrobiopterin + H2O. The polypeptide is Putative pterin-4-alpha-carbinolamine dehydratase (Xanthomonas euvesicatoria pv. vesicatoria (strain 85-10) (Xanthomonas campestris pv. vesicatoria)).